We begin with the raw amino-acid sequence, 188 residues long: Ribose 1,5-bisphosphate phosphokinase PhnN (188 aa).

Belongs to the ribose 1,5-bisphosphokinase family.

It carries out the reaction alpha-D-ribose 1,5-bisphosphate + ATP = 5-phospho-alpha-D-ribose 1-diphosphate + ADP. The protein operates within metabolic intermediate biosynthesis; 5-phospho-alpha-D-ribose 1-diphosphate biosynthesis; 5-phospho-alpha-D-ribose 1-diphosphate from D-ribose 5-phosphate (route II): step 3/3. Functionally, catalyzes the phosphorylation of ribose 1,5-bisphosphate to 5-phospho-D-ribosyl alpha-1-diphosphate (PRPP). The sequence is that of Ribose 1,5-bisphosphate phosphokinase PhnN from Dickeya zeae (strain Ech586) (Dickeya dadantii (strain Ech586)).